The primary structure comprises 115 residues: Superoxide reductase (115 aa).

Residues E14, H16, H41, H47, C102, and H105 each contribute to the Fe cation site.

It belongs to the desulfoferrodoxin family. As to quaternary structure, homotetramer. Fe cation serves as cofactor.

The catalysed reaction is reduced [rubredoxin] + superoxide + 2 H(+) = oxidized [rubredoxin] + H2O2. Uses electrons from reduced NADP, by way of rubredoxin and an oxidoreductase, to catalyze the reduction of superoxide to hydrogen peroxide. In Pyrococcus horikoshii (strain ATCC 700860 / DSM 12428 / JCM 9974 / NBRC 100139 / OT-3), this protein is Superoxide reductase (sorA).